Here is a 148-residue protein sequence, read N- to C-terminus: Ubiquitin-like protein 4A (148 aa).

The Ubiquitin-like domain occupies 1 to 76 (MQLTVKALKG…LNLMVKEQVA (76 aa)).

In terms of assembly, component of the bag6/bat3 complex.

The protein resides in the cytoplasm. It is found in the cytosol. Its subcellular location is the nucleus. Functionally, as part of a cytosolic protein quality control complex, the bag6/bat3 complex, maintains misfolded and hydrophobic patches-containing proteins in a soluble state and participates in their proper delivery to the endoplasmic reticulum or alternatively can promote their sorting to the proteasome where they undergo degradation. The bag6/bat3 complex is involved in the post-translational delivery of tail-anchored/type II transmembrane proteins to the endoplasmic reticulum membrane. Similarly, the bag6/bat3 complex also functions as a sorting platform for proteins of the secretory pathway that are mislocalized to the cytosol either delivering them to the proteasome for degradation or to the endoplasmic reticulum. The bag6/bat3 complex also plays a role in the endoplasmic reticulum-associated degradation (ERAD), a quality control mechanism that eliminates unwanted proteins of the endoplasmic reticulum through their retrotranslocation to the cytosol and their targeting to the proteasome. It maintains these retrotranslocated proteins in an unfolded yet soluble state condition in the cytosol to ensure their proper delivery to the proteasome. This is Ubiquitin-like protein 4A (ubl4a) from Xenopus tropicalis (Western clawed frog).